The following is a 119-amino-acid chain: Small ribosomal subunit protein uS13m (119 aa).

Belongs to the universal ribosomal protein uS13 family. Component of the mitochondrial small ribosomal subunit (mt-SSU). Mature N.crassa 74S mitochondrial ribosomes consist of a small (37S) and a large (54S) subunit. The 37S small subunit contains a 16S ribosomal RNA (16S mt-rRNA) and 32 different proteins. The 54S large subunit contains a 23S rRNA (23S mt-rRNA) and 42 different proteins.

It localises to the mitochondrion. Component of the mitochondrial ribosome (mitoribosome), a dedicated translation machinery responsible for the synthesis of mitochondrial genome-encoded proteins, including at least some of the essential transmembrane subunits of the mitochondrial respiratory chain. The mitoribosomes are attached to the mitochondrial inner membrane and translation products are cotranslationally integrated into the membrane. In Neurospora crassa (strain ATCC 24698 / 74-OR23-1A / CBS 708.71 / DSM 1257 / FGSC 987), this protein is Small ribosomal subunit protein uS13m (sws2).